Consider the following 340-residue polypeptide: Protein RecA (340 aa).

67 to 74 (GNESSGKT) provides a ligand contact to ATP.

Belongs to the RecA family.

It is found in the cytoplasm. Functionally, can catalyze the hydrolysis of ATP in the presence of single-stranded DNA, the ATP-dependent uptake of single-stranded DNA by duplex DNA, and the ATP-dependent hybridization of homologous single-stranded DNAs. It interacts with LexA causing its activation and leading to its autocatalytic cleavage. The polypeptide is Protein RecA (Mycoplasma genitalium (strain ATCC 33530 / DSM 19775 / NCTC 10195 / G37) (Mycoplasmoides genitalium)).